The following is a 339-amino-acid chain: Heat-inducible transcription repressor HrcA (339 aa).

It belongs to the HrcA family.

Its function is as follows. Negative regulator of class I heat shock genes (grpE-dnaK-dnaJ and groELS operons). Prevents heat-shock induction of these operons. This is Heat-inducible transcription repressor HrcA from Cutibacterium acnes (strain DSM 16379 / KPA171202) (Propionibacterium acnes).